Here is a 224-residue protein sequence, read N- to C-terminus: 7-cyano-7-deazaguanine synthase (224 aa).

8–18 (VSGGADSATVL) provides a ligand contact to ATP. Zn(2+) contacts are provided by C189, C199, C202, and C205.

It belongs to the QueC family. It depends on Zn(2+) as a cofactor.

It carries out the reaction 7-carboxy-7-deazaguanine + NH4(+) + ATP = 7-cyano-7-deazaguanine + ADP + phosphate + H2O + H(+). It participates in purine metabolism; 7-cyano-7-deazaguanine biosynthesis. Catalyzes the ATP-dependent conversion of 7-carboxy-7-deazaguanine (CDG) to 7-cyano-7-deazaguanine (preQ(0)). The sequence is that of 7-cyano-7-deazaguanine synthase from Rickettsia felis (strain ATCC VR-1525 / URRWXCal2) (Rickettsia azadi).